The following is a 3351-amino-acid chain: Apolipophorins (3351 aa).

A signal peptide spans 1–25 (MARMKYNIALIGILASVLLTIAVNA). Residues 43–641 (YIPGNYYDYS…SQHGFLPRSS (599 aa)) form the Vitellogenin domain. N-linked (GlcNAc...) asparagine glycosylation is found at Asn-67, Asn-644, Asn-1514, Asn-1744, Asn-1932, Asn-1979, and Asn-2822. The region spanning 2786 to 2952 (LRGHVVDGKH…DYGVGKCTAI (167 aa)) is the VWFD domain.

In terms of assembly, interacts with Nrx-1 (via cytoplasmic domain); the interaction supports apolpp/ApoLI protein stability. In terms of processing, may be modified covalently by lipidation. Post-translationally, cleaved into 2 chains by furin protease. However, prevention of cleavage does not impair its function. During stage 12, it is highly present throughout the yolk sac. By late stage 14, it localizes in the lateral fat body cells. Starting at stage 14, it localizes to the apodemes. Component of hemolymph clots (at protein level). Expressed in the amniosera. Expressed in rhabdomere of photoreceptor cells in retina (at protein level). In terms of tissue distribution, expressed in rhabdomere of photoreceptor cells in retina (at protein level). As to expression, expressed in simper cells as well as interphotoreceptor matrix (at protein level).

It localises to the secreted. The protein resides in the cell projection. The protein localises to the rhabdomere. Constitutes the major component of lipophorin, which mediates transport for various types of lipids in hemolymph. Acts by forming lipoprotein particles that bind lipoproteins and lipids. Also involved in the transport of hydrophobic ligands like juvenile hormones, pheromone hydrocarbons and carotenoids. Required for morphogens wingless (wg) and hedgehog (hh) function, probably by acting as vehicles for the movement of wg and hh, explaining how covalently lipidated wg and hh can spread over long distances. May also be involved in transport and/or metabolism of heme. Involved in yolk granule formation. May be a component of yolk incorporated into yolk granules via yl/yolkless-mediated endocytosis and the endolysosomal pathway. The polypeptide is Apolipophorins (Drosophila melanogaster (Fruit fly)).